The following is a 203-amino-acid chain: CS5 fimbrial subunit (203 aa).

The signal sequence occupies residues 1-22; sequence MKKNLLITSVLAMATVSGSVLA.

It is found in the fimbrium. Major subunit of fimbriae. Fimbriae (also called pili), are polar filaments radiating from the surface of the bacterium to a length of 0.5-1.5 micrometers and numbering 100-300 per cell. They enable bacteria to colonize the epithelium of specific host organs. The protein is CS5 fimbrial subunit of Escherichia coli.